The following is a 324-amino-acid chain: Beta-ketoacyl-[acyl-carrier-protein] synthase III (324 aa).

Active-site residues include C112 and H249. Residues 250–254 are ACP-binding; the sequence is QANDR. The active site involves N279.

It belongs to the thiolase-like superfamily. FabH family. As to quaternary structure, homodimer.

The protein localises to the cytoplasm. The catalysed reaction is malonyl-[ACP] + acetyl-CoA + H(+) = 3-oxobutanoyl-[ACP] + CO2 + CoA. The protein operates within lipid metabolism; fatty acid biosynthesis. Catalyzes the condensation reaction of fatty acid synthesis by the addition to an acyl acceptor of two carbons from malonyl-ACP. Catalyzes the first condensation reaction which initiates fatty acid synthesis and may therefore play a role in governing the total rate of fatty acid production. Possesses both acetoacetyl-ACP synthase and acetyl transacylase activities. Its substrate specificity determines the biosynthesis of branched-chain and/or straight-chain of fatty acids. This chain is Beta-ketoacyl-[acyl-carrier-protein] synthase III, found in Streptococcus pneumoniae serotype 19F (strain G54).